The chain runs to 942 residues: Protein FAM184B (942 aa).

Disordered regions lie at residues 1–26 (MASALNSKIHPPGTCASSKADARGGS) and 73–97 (QEDLQDTGAETRTRLPQEQSRTSED). Coiled coils occupy residues 89–150 (QEQS…RVLI), 196–337 (EMHQ…DRLM), and 387–495 (SETQ…SLLE). The tract at residues 486 to 542 (STKLQNSLLEDPCSRPKKPARDEGLEKLTDEEESSSDEEERTGESVKGKSDLQPPFE) is disordered. A compositionally biased stretch (basic and acidic residues) spans 504–513 (PARDEGLEKL). A compositionally biased stretch (acidic residues) spans 514 to 526 (TDEEESSSDEEER). Coiled-coil stretches lie at residues 575–619 (NKDS…ESLR) and 686–815 (EKGL…ERRF). Residues 880–934 (APPITKSPSLDPSPSCSQPYKPTQLLDGKTASRTQDGEPAQPKEAPQKQGSPHQE) form a disordered region. The segment covering 885–900 (KSPSLDPSPSCSQPYK) has biased composition (polar residues).

Belongs to the FAM184 family.

This is Protein FAM184B (Fam184b) from Mus musculus (Mouse).